Consider the following 274-residue polypeptide: ATP synthase subunit a (274 aa).

Transmembrane regions (helical) follow at residues 43 to 63 (TLNI…LLVF), 103 to 123 (VIAP…MMDL), 149 to 169 (DVSI…FYSI), 223 to 243 (LIFI…LSVP), and 245 to 265 (AIFH…LTIV).

This sequence belongs to the ATPase A chain family. As to quaternary structure, F-type ATPases have 2 components, CF(1) - the catalytic core - and CF(0) - the membrane proton channel. CF(1) has five subunits: alpha(3), beta(3), gamma(1), delta(1), epsilon(1). CF(0) has three main subunits: a(1), b(2) and c(9-12). The alpha and beta chains form an alternating ring which encloses part of the gamma chain. CF(1) is attached to CF(0) by a central stalk formed by the gamma and epsilon chains, while a peripheral stalk is formed by the delta and b chains.

The protein localises to the cell inner membrane. Its function is as follows. Key component of the proton channel; it plays a direct role in the translocation of protons across the membrane. This Yersinia pestis bv. Antiqua (strain Antiqua) protein is ATP synthase subunit a.